The following is a 413-amino-acid chain: Floricaula/leafy homolog 1 (413 aa).

Disordered stretches follow at residues 154-177 and 191-239; these read EGLS…GGTT and QRRR…RQRE. A compositionally biased stretch (basic and acidic residues) spans 201–210; it reads GRERRGRASA. Residues 211–225 are compositionally biased toward acidic residues; sequence EEDEETEEGQEDEWN. 3 consecutive DNA-binding regions follow at residues 238 to 242, 307 to 314, and 378 to 381; these read REHPF, NKPKMRHY, and YVPT.

The protein belongs to the FLO/LFY family. In terms of tissue distribution, expressed in floral meristems and in indeterminate vegetative meristems.

Its subcellular location is the nucleus. Its function is as follows. Probable transcription factor that act to specify determinacy in the progenitor cells for both flowers and leaves. The protein is Floricaula/leafy homolog 1 (FL1) of Nicotiana tabacum (Common tobacco).